Here is a 331-residue protein sequence, read N- to C-terminus: NADH-quinone oxidoreductase subunit H (331 aa).

Transmembrane regions (helical) follow at residues 13–33, 80–100, 113–133, 159–179, 183–203, 249–269, 273–293, and 311–331; these read FLIS…VLTL, WVFL…WLVI, IGLV…IMAG, LILS…VDIV, AGGF…AFFV, VMSA…LPFL, VFNW…FQWI, and KILV…MLVI.

Belongs to the complex I subunit 1 family. In terms of assembly, NDH-1 is composed of 14 different subunits. Subunits NuoA, H, J, K, L, M, N constitute the membrane sector of the complex.

It localises to the cell membrane. The catalysed reaction is a quinone + NADH + 5 H(+)(in) = a quinol + NAD(+) + 4 H(+)(out). NDH-1 shuttles electrons from NADH, via FMN and iron-sulfur (Fe-S) centers, to quinones in the respiratory chain. The immediate electron acceptor for the enzyme in this species is believed to be ubiquinone. Couples the redox reaction to proton translocation (for every two electrons transferred, four hydrogen ions are translocated across the cytoplasmic membrane), and thus conserves the redox energy in a proton gradient. This subunit may bind ubiquinone. The protein is NADH-quinone oxidoreductase subunit H of Rubrobacter xylanophilus (strain DSM 9941 / JCM 11954 / NBRC 16129 / PRD-1).